We begin with the raw amino-acid sequence, 730 residues long: Double-strand break repair protein MRE11 (730 aa).

The Mn(2+) site is built by Asp-17, His-19, Asp-57, and Asn-124. His-125 functions as the Proton donor in the catalytic mechanism. Mn(2+)-binding residues include His-213, His-241, and His-243. Residues Leu-521–Tyr-730 are disordered. Acidic residues predominate over residues Gly-581–Glu-591. Over residues Lys-595–Pro-633 the composition is skewed to low complexity. The segment covering Ser-645–Asp-659 has biased composition (acidic residues). Positions Pro-662–Lys-672 are enriched in pro residues. The span at Thr-685–Lys-704 shows a compositional bias: polar residues. A compositionally biased stretch (acidic residues) spans Ile-708–Phe-719.

The protein belongs to the MRE11/RAD32 family. As to quaternary structure, component of the MRN complex composed of two heterodimers RAD50 and MRE11 associated with a single NBS1. Requires Mn(2+) as cofactor.

It is found in the nucleus. Its subcellular location is the chromosome. It localises to the telomere. Its function is as follows. Core component of the MRN complex, which plays a central role in double-strand break (DSB) repair, DNA recombination, maintenance of telomere integrity and meiosis. The MRN complex is involved in the repair of DNA double-strand breaks (DSBs) via homologous recombination (HR), an error-free mechanism which primarily occurs during S and G2 phases. The complex (1) mediates the end resection of damaged DNA, which generates proper single-stranded DNA, a key initial steps in HR, and is (2) required for the recruitment of other repair factors and efficient activation of ATM and ATR upon DNA damage. Within the MRN complex, MRE11 possesses both single-strand endonuclease activity and double-strand-specific 3'-5' exonuclease activity. MRE11 first endonucleolytically cleaves the 5' strand at DNA DSB ends to prevent non-homologous end joining (NHEJ) and licence HR. It then generates a single-stranded DNA gap via 3' to 5' exonucleolytic degradation, which is required for single-strand invasion and recombination. The protein is Double-strand break repair protein MRE11 of Chaetomium thermophilum (strain DSM 1495 / CBS 144.50 / IMI 039719) (Thermochaetoides thermophila).